The sequence spans 1400 residues: DNA-directed RNA polymerase subunit beta' (1400 aa).

The Zn(2+) site is built by Cys70, Cys72, Cys85, and Cys88. The Mg(2+) site is built by Asp460, Asp462, and Asp464. Zn(2+)-binding residues include Cys814, Cys889, Cys896, and Cys899.

This sequence belongs to the RNA polymerase beta' chain family. The RNAP catalytic core consists of 2 alpha, 1 beta, 1 beta' and 1 omega subunit. When a sigma factor is associated with the core the holoenzyme is formed, which can initiate transcription. Mg(2+) is required as a cofactor. Zn(2+) serves as cofactor.

It carries out the reaction RNA(n) + a ribonucleoside 5'-triphosphate = RNA(n+1) + diphosphate. Its function is as follows. DNA-dependent RNA polymerase catalyzes the transcription of DNA into RNA using the four ribonucleoside triphosphates as substrates. This chain is DNA-directed RNA polymerase subunit beta', found in Alcanivorax borkumensis (strain ATCC 700651 / DSM 11573 / NCIMB 13689 / SK2).